Consider the following 413-residue polypeptide: Hemolin (413 aa).

The signal sequence occupies residues 1–18; sequence MASKSLVVLSACIIIGSA. Ig-like C2-type domains are found at residues 25-112, 122-211, 233-322, and 327-413; these read PVLK…RVIS, PAKT…GEVR, PQYL…LKVT, and PKYV…VQVN. Cystine bridges form between cysteine 46–cysteine 97, cysteine 140–cysteine 199, cysteine 252–cysteine 305, and cysteine 349–cysteine 395. Residue asparagine 283 is glycosylated (N-linked (GlcNAc...) asparagine).

This sequence belongs to the hemolin family. As to expression, expressed in larval bristles.

The protein localises to the secreted. Increased activity in presence of phospholipids (low concentrations) and calcium ions. Inhibited by PMSF. Not affected by EDTA and E-64. In terms of biological role, bristle toxin involved in caterpillar defense by participating in hemorrhagic syndrome characterized by a consumptive coagulopathy. Exhibits procoagulant activity through selective factor X proteolytic activation. Activates factor X in a dose- and time-dependent manner but does not activate gamma-carboxyglutamic acid domainless factor X. Its activity does not depend on calcium ions. Also functions as a growth stimulator and an inhibitor of cellular death for endothelial cells. In vitro, increases proliferation of human umbilical vein endothelial cells (HUVEC) and inhibits the apoptosis induced by starvation. Also increases slightly the complement decay-accelerating factor (CD55), which protects cells from complement-mediated lysis. On the other hand, does not alter the release or expression of von Willebrand factor (VWF), tissue factor (F3), intercellular adhesion molecule-1 (ICAM1), interleukin-8 (CXCL8), and prostacyclin. Does not show fibrinolytic or fibrinogenolytic activities. In Lonomia obliqua (Moth), this protein is Hemolin.